The following is a 609-amino-acid chain: Tyrosine-protein kinase transforming protein Fes (609 aa).

Disordered stretches follow at residues 1 to 20 (AARADGTMGFSSELCSPQGH) and 152 to 208 (RDSA…GGRT). In terms of domain architecture, F-BAR; degenerate spans 8–174 (MGFSSELCSP…SKDKDRDKAK (167 aa)). Composition is skewed to basic and acidic residues over residues 160-175 (KYQEASKDKDRDKAKL) and 190-206 (QDDRHSTSSSEQEREGG). Residues 247 to 336 (WYHGALPRAE…KSGIVLNRAV (90 aa)) form the SH2 domain. One can recognise a Protein kinase domain in the interval 348–609 (LVLGEQIGRG…ELQSIRKRHR (262 aa)). Residues 354–362 (IGRGNFGEV) and K377 each bind ATP. The active-site Proton acceptor is the D470. A Phosphotyrosine; by autocatalysis modification is found at Y500.

This sequence belongs to the protein kinase superfamily. Tyr protein kinase family. Fes/fps subfamily.

It catalyses the reaction L-tyrosyl-[protein] + ATP = O-phospho-L-tyrosyl-[protein] + ADP + H(+). In Felidae (cat family), this protein is Tyrosine-protein kinase transforming protein Fes (V-FES).